The following is a 239-amino-acid chain: Ribosomal RNA small subunit methyltransferase G (239 aa).

S-adenosyl-L-methionine contacts are provided by residues G77, F82, 128-129 (AE), and R147.

The protein belongs to the methyltransferase superfamily. RNA methyltransferase RsmG family.

The protein resides in the cytoplasm. Specifically methylates the N7 position of guanine in position 535 of 16S rRNA. This is Ribosomal RNA small subunit methyltransferase G from Bacillus cereus (strain G9842).